A 376-amino-acid polypeptide reads, in one-letter code: Succinyl-diaminopimelate desuccinylase (376 aa).

Histidine 67 is a Zn(2+) binding site. The active site involves aspartate 69. Aspartate 100 contributes to the Zn(2+) binding site. The active-site Proton acceptor is the glutamate 134. 3 residues coordinate Zn(2+): glutamate 135, glutamate 163, and histidine 349.

It belongs to the peptidase M20A family. DapE subfamily. Homodimer. Requires Zn(2+) as cofactor. It depends on Co(2+) as a cofactor.

It carries out the reaction N-succinyl-(2S,6S)-2,6-diaminopimelate + H2O = (2S,6S)-2,6-diaminopimelate + succinate. It functions in the pathway amino-acid biosynthesis; L-lysine biosynthesis via DAP pathway; LL-2,6-diaminopimelate from (S)-tetrahydrodipicolinate (succinylase route): step 3/3. In terms of biological role, catalyzes the hydrolysis of N-succinyl-L,L-diaminopimelic acid (SDAP), forming succinate and LL-2,6-diaminopimelate (DAP), an intermediate involved in the bacterial biosynthesis of lysine and meso-diaminopimelic acid, an essential component of bacterial cell walls. This chain is Succinyl-diaminopimelate desuccinylase, found in Pseudoalteromonas atlantica (strain T6c / ATCC BAA-1087).